The sequence spans 73 residues: Ferredoxin-thioredoxin reductase, variable chain (73 aa).

Residues 43–46 are interaction with ferredoxin; that stretch reads NGKP.

The protein belongs to the ferredoxin thioredoxin reductase alpha subunit family. In terms of assembly, heterodimer of subunit A (variable subunit) and subunit B (catalytic subunit). Heterodimeric FTR forms a complex with ferredoxin and thioredoxin.

Its function is as follows. Variable subunit of the ferredoxin-thioredoxin reductase (FTR), which catalyzes the two-electron reduction of thioredoxins by the electrons provided by reduced ferredoxin. The chain is Ferredoxin-thioredoxin reductase, variable chain (ftrV) from Synechococcus sp. (strain ATCC 27144 / PCC 6301 / SAUG 1402/1) (Anacystis nidulans).